Here is a 229-residue protein sequence, read N- to C-terminus: Potassium/proton antiporter CemA (229 aa).

A run of 3 helical transmembrane segments spans residues 6–26 (AFIP…ISLS), 114–134 (ILCF…LLII), and 189–209 (IISG…KYWI).

It belongs to the CemA family.

It localises to the plastid. The protein localises to the chloroplast inner membrane. It carries out the reaction K(+)(in) + H(+)(out) = K(+)(out) + H(+)(in). Contributes to K(+)/H(+) antiport activity by supporting proton efflux to control proton extrusion and homeostasis in chloroplasts in a light-dependent manner to modulate photosynthesis. Prevents excessive induction of non-photochemical quenching (NPQ) under continuous-light conditions. Indirectly promotes efficient inorganic carbon uptake into chloroplasts. The chain is Potassium/proton antiporter CemA from Carica papaya (Papaya).